The chain runs to 134 residues: Perlwapin (134 aa).

3 WAP domains span residues G2–K45, P46–E89, and K90–C132. 12 disulfides stabilise this stretch: C8-C34, C17-C38, C21-C33, C27-C42, C51-C77, C59-C82, C64-C76, C70-C85, C94-C121, C104-C124, C108-C120, and C114-C128.

In terms of tissue distribution, nacreous layer of shell.

Inhibits growth of calcium carbonate crystals. May inhibit growth of certain crystallographic planes in the mineral phase of nacre in the shell. In Haliotis laevigata (Smooth Australian abalone), this protein is Perlwapin.